A 291-amino-acid chain; its full sequence is N-acetylmannosamine kinase (291 aa).

Residues 5–12 (AIDIGGTK) and 132–139 (GVGGGVVS) contribute to the ATP site. Positions 156, 166, 168, and 173 each coordinate Zn(2+).

Belongs to the ROK (NagC/XylR) family. NanK subfamily. In terms of assembly, homodimer.

It catalyses the reaction an N-acyl-D-mannosamine + ATP = an N-acyl-D-mannosamine 6-phosphate + ADP + H(+). It participates in amino-sugar metabolism; N-acetylneuraminate degradation; D-fructose 6-phosphate from N-acetylneuraminate: step 2/5. Functionally, catalyzes the phosphorylation of N-acetylmannosamine (ManNAc) to ManNAc-6-P. This Escherichia coli O157:H7 protein is N-acetylmannosamine kinase.